The chain runs to 206 residues: Putative amino-acid transporter YggA (206 aa).

A run of 6 helical transmembrane segments spans residues 1-21 (MFAT…PIGA), 37-57 (LLAA…GVFG), 65-85 (SPIG…WFGI), 116-136 (LGVT…LGSF), 148-168 (FAAG…FGAA), and 185-205 (TIVG…ALLA).

The protein belongs to the LysE/ArgO transporter (TC 2.A.75) family.

Its subcellular location is the cell membrane. In Aeromonas salmonicida, this protein is Putative amino-acid transporter YggA (yggA).